Reading from the N-terminus, the 361-residue chain is S-adenosylmethionine:tRNA ribosyltransferase-isomerase (361 aa).

The protein belongs to the QueA family. Monomer.

Its subcellular location is the cytoplasm. It catalyses the reaction 7-aminomethyl-7-carbaguanosine(34) in tRNA + S-adenosyl-L-methionine = epoxyqueuosine(34) in tRNA + adenine + L-methionine + 2 H(+). The protein operates within tRNA modification; tRNA-queuosine biosynthesis. Functionally, transfers and isomerizes the ribose moiety from AdoMet to the 7-aminomethyl group of 7-deazaguanine (preQ1-tRNA) to give epoxyqueuosine (oQ-tRNA). The polypeptide is S-adenosylmethionine:tRNA ribosyltransferase-isomerase (Actinobacillus pleuropneumoniae serotype 3 (strain JL03)).